The primary structure comprises 161 residues: SsrA-binding protein (161 aa).

Belongs to the SmpB family.

The protein resides in the cytoplasm. Its function is as follows. Required for rescue of stalled ribosomes mediated by trans-translation. Binds to transfer-messenger RNA (tmRNA), required for stable association of tmRNA with ribosomes. tmRNA and SmpB together mimic tRNA shape, replacing the anticodon stem-loop with SmpB. tmRNA is encoded by the ssrA gene; the 2 termini fold to resemble tRNA(Ala) and it encodes a 'tag peptide', a short internal open reading frame. During trans-translation Ala-aminoacylated tmRNA acts like a tRNA, entering the A-site of stalled ribosomes, displacing the stalled mRNA. The ribosome then switches to translate the ORF on the tmRNA; the nascent peptide is terminated with the 'tag peptide' encoded by the tmRNA and targeted for degradation. The ribosome is freed to recommence translation, which seems to be the essential function of trans-translation. This Vesicomyosocius okutanii subsp. Calyptogena okutanii (strain HA) protein is SsrA-binding protein.